The primary structure comprises 178 residues: uncharacterized protein (178 aa).

Residues 7-27 (LAIGTAILLIGMAYWTVSIVE) form a helical membrane-spanning segment.

It localises to the membrane. This is an uncharacterized protein from Methanocaldococcus jannaschii (strain ATCC 43067 / DSM 2661 / JAL-1 / JCM 10045 / NBRC 100440) (Methanococcus jannaschii).